The chain runs to 497 residues: MEKKYILALDQGTTSSRAMIIDEEGEVIGVAQEEFDQIFPKPGWVEHNANEIWASILAVIAGVLLKTNISSKEIAGIGITNQRETTVIWDKESGNPIYNAIVWQSRQTEDICKQLRKDGYEDTIRSKTGLLIDPYFAGTKARWILDHVDGAQERAEKGELLFGTIDTWLVWKLTGGRAHITDYSNASRTLLYNIYDLEWDDELLKMLNIPRAMLPEVRPSSEVYADTVPYHFFGEEVPVAGIAGDQQAALFGQGCFEKGMAKNTYGTGCFLLMNTGEKAVRSENGLLTTLAWGIDGKVEYALEGSIFVAGSAIQWLRDGLRMVRQSSDSENYASRIESSDGVYVVPAFVGLGAPYWDSDVRGAVFGLTRGTEKEQFIRATLESLAYQTRDVLYAMEQDSGISLKTLRVDGGASANNFLMQFQSDILGVPVERPENKETTVLGAAFLAGLAVGVWKDKNEIKKHWKLDKRFEVEMKDEQREDLYEGWHKAVKAAQAFK.

ADP is bound at residue Thr-13. Residues Thr-13, Thr-14, and Ser-15 each contribute to the ATP site. Thr-13 is a sn-glycerol 3-phosphate binding site. Arg-17 contacts ADP. Sn-glycerol 3-phosphate contacts are provided by Arg-83, Glu-84, and Tyr-135. Glycerol contacts are provided by Arg-83, Glu-84, and Tyr-135. A Phosphohistidine; by HPr modification is found at His-231. Asp-245 is a sn-glycerol 3-phosphate binding site. Positions 245 and 246 each coordinate glycerol. ADP is bound by residues Thr-267 and Gly-310. ATP is bound by residues Thr-267, Gly-310, Gln-314, and Gly-411. The ADP site is built by Gly-411 and Asn-415.

Belongs to the FGGY kinase family. Homotetramer and homodimer (in equilibrium). In terms of processing, the phosphoenolpyruvate-dependent sugar phosphotransferase system (PTS), including enzyme I, and histidine-containing protein (HPr) are required for the phosphorylation, which leads to the activation of the enzyme.

It carries out the reaction glycerol + ATP = sn-glycerol 3-phosphate + ADP + H(+). It functions in the pathway polyol metabolism; glycerol degradation via glycerol kinase pathway; sn-glycerol 3-phosphate from glycerol: step 1/1. Its activity is regulated as follows. Activated by phosphorylation and inhibited by fructose 1,6-bisphosphate (FBP). In terms of biological role, key enzyme in the regulation of glycerol uptake and metabolism. Catalyzes the phosphorylation of glycerol to yield sn-glycerol 3-phosphate. The polypeptide is Glycerol kinase (Listeria monocytogenes serotype 4a (strain HCC23)).